Reading from the N-terminus, the 229-residue chain is Flagellar L-ring protein (229 aa).

Residues 1–23 (MLSRLGARALVCLAGVAMLAASG) form the signal peptide. Cys24 carries the N-palmitoyl cysteine lipid modification. Cys24 carries S-diacylglycerol cysteine lipidation.

Belongs to the FlgH family. As to quaternary structure, the basal body constitutes a major portion of the flagellar organelle and consists of four rings (L,P,S, and M) mounted on a central rod.

The protein resides in the cell outer membrane. It localises to the bacterial flagellum basal body. Functionally, assembles around the rod to form the L-ring and probably protects the motor/basal body from shearing forces during rotation. In Cupriavidus taiwanensis (strain DSM 17343 / BCRC 17206 / CCUG 44338 / CIP 107171 / LMG 19424 / R1) (Ralstonia taiwanensis (strain LMG 19424)), this protein is Flagellar L-ring protein.